A 483-amino-acid polypeptide reads, in one-letter code: Cysteine proteinase 1, mitochondrial (483 aa).

A mitochondrion-targeting transit peptide spans 1-30 (MLPTSVSWSLYLKTFRSHLLRAPQIVLKRM). Catalysis depends on residues Cys-102, His-398, and Asn-421. Lys-483 is a propeptide (removed in mature form; by autocatalysis).

Belongs to the peptidase C1 family. In terms of assembly, homohexamer. Binds to nucleic acids. Binds single-stranded DNA and RNA with higher affinity than double-stranded DNA. The N-terminus of isoform Cytoplasmic is blocked.

It localises to the mitochondrion. The protein resides in the cytoplasm. The enzyme catalyses Inactivates bleomycin B2 (a cytotoxic glycometallopeptide) by hydrolysis of a carboxyamide bond of beta-aminoalanine, but also shows general aminopeptidase activity. The specificity varies somewhat with source, but amino acid arylamides of Met, Leu and Ala are preferred.. Its activity is regulated as follows. Inhibited by E64, a specific inhibitor of cysteine proteases, N-ethylmaleimide, iodacetamide, and mercury and zinc ions. The normal physiological role of the enzyme is unknown, but it is not essential for the viability of yeast cells. Has aminopeptidase activity, shortening substrate peptides sequentially by 1 amino acid. Has bleomycin hydrolase activity, which can protect the cell from the toxic effects of bleomycin. Has homocysteine-thiolactonase activity, protecting the cell against homocysteine toxicity. Acts as a repressor in the GAL4 regulatory system, but this does not require either the peptidase or nucleic acid-binding activities. This Saccharomyces cerevisiae (strain YJM789) (Baker's yeast) protein is Cysteine proteinase 1, mitochondrial (LAP3).